Reading from the N-terminus, the 411-residue chain is Putative nickel insertion protein (411 aa).

Belongs to the LarC family.

The polypeptide is Putative nickel insertion protein (Acaryochloris marina (strain MBIC 11017)).